Consider the following 707-residue polypeptide: Leukotoxin export ATP-binding protein LtxB (707 aa).

In terms of domain architecture, Peptidase C39 spans 4-125 (QKNTNLALQA…ERYQSKVILI (122 aa)). Residue histidine 83 is part of the active site. The next 5 membrane-spanning stretches (helical) occupy residues 158–178 (LIVS…FQVV), 191–211 (LNVI…LGGL), 269–289 (ALTS…MWYY), 295–315 (LVVL…SPIL), and 387–407 (AVMV…DLSI). The ABC transmembrane type-1 domain maps to 158 to 436 (LIVSIFLQIF…LAQIWQDFQQ (279 aa)). In terms of domain architecture, ABC transporter spans 468 to 703 (ISFRNIKFRY…EKGLYSYLHQ (236 aa)). 502 to 509 (GRSGSGKS) is an ATP binding site.

Belongs to the ABC transporter superfamily. Protein-1 exporter (TC 3.A.1.109) family. As to quaternary structure, probably part of a complex composed of LtxB, LtxD and TdeA, which forms a single transport channel across the two membranes.

It localises to the cell inner membrane. The catalysed reaction is ATP + H2O + proteinSide 1 = ADP + phosphate + proteinSide 2.. In terms of biological role, involved in the export of the LtxA leukotoxin. In Aggregatibacter actinomycetemcomitans (Actinobacillus actinomycetemcomitans), this protein is Leukotoxin export ATP-binding protein LtxB.